We begin with the raw amino-acid sequence, 244 residues long: MSIEIVQKSLFNIIEAVADAVTASQATKRCRLVAVSKTKSADLIEACYSQNQRHFGENYVQELEEKSDVLASKCLDIRWHFIGQVQSNKIGKICNSPGLWCVETVETEKHARIFDKEWSKHGANLSPLRVLVQVNTSGEDNKGGIEIGEAPKLAEFIRKECQNLKFDGFMTIGSFDNSHASGENPDFEKLFKVRQTWAEQTGESADSVELSMGMSDDFLQAIHQGATSVRVGSKLFGAREYKNK.

Residue Lys-37 is modified to N6-(pyridoxal phosphate)lysine.

It belongs to the pyridoxal phosphate-binding protein YggS/PROSC family.

In terms of biological role, pyridoxal 5'-phosphate (PLP)-binding protein, which may be involved in intracellular homeostatic regulation of pyridoxal 5'-phosphate (PLP), the active form of vitamin B6. In Caenorhabditis elegans, this protein is Pyridoxal phosphate homeostasis protein.